Reading from the N-terminus, the 201-residue chain is Sorting nexin-10 (201 aa).

The interval 8–125 is required for interaction with ATP6V1D; sequence EEFVSVWVRD…SLHLFLQSHL (118 aa). A PX domain is found at 10 to 127; the sequence is FVSVWVRDPR…HLFLQSHLNS (118 aa). Residues Arg53, Lys79, and Arg94 each contribute to the a 1,2-diacyl-sn-glycero-3-phospho-(1D-myo-inositol-3-phosphate) site. The segment at 155–201 is disordered; sequence RFPEEEEEGKKDADVEYDSESSSSGLGHSSDDSSSHGCKTSPALQES.

The protein belongs to the sorting nexin family. In terms of assembly, interacts with ATP6V1D; may play a role in ciliogenesis. In terms of tissue distribution, expressed in femur, calvariae and teeth.

It localises to the cytoplasm. It is found in the endosome membrane. The protein localises to the cytoskeleton. Its subcellular location is the microtubule organizing center. The protein resides in the centrosome. Functionally, probable phosphoinositide-binding protein involved in protein sorting and membrane trafficking in endosomes. Plays a role in cilium biogenesis through regulation of the transport and the localization of proteins to the cilium. Required for the localization to the cilium of V-ATPase subunit ATP6V1D and ATP6V0D1, and RAB8A. Involved in osteoclast differentiation and therefore bone resorption. The sequence is that of Sorting nexin-10 (Snx10) from Mus musculus (Mouse).